The following is a 487-amino-acid chain: 3-octaprenyl-4-hydroxybenzoate carboxy-lyase (487 aa).

Mn(2+) is bound at residue Asn172. Prenylated FMN contacts are provided by residues Ile175–Arg177, Arg189–Leu191, and Arg194–Gly195. Mn(2+) is bound at residue Glu238. Catalysis depends on Asp287, which acts as the Proton donor.

It belongs to the UbiD family. In terms of assembly, homohexamer. The cofactor is prenylated FMN. Requires Mn(2+) as cofactor.

It localises to the cell membrane. It catalyses the reaction a 4-hydroxy-3-(all-trans-polyprenyl)benzoate + H(+) = a 2-(all-trans-polyprenyl)phenol + CO2. The protein operates within cofactor biosynthesis; ubiquinone biosynthesis. Catalyzes the decarboxylation of 3-octaprenyl-4-hydroxy benzoate to 2-octaprenylphenol, an intermediate step in ubiquinone biosynthesis. This Actinobacillus pleuropneumoniae serotype 3 (strain JL03) protein is 3-octaprenyl-4-hydroxybenzoate carboxy-lyase.